We begin with the raw amino-acid sequence, 174 residues long: ATP-dependent protease subunit HslV (174 aa).

Thr2 is an active-site residue. Gly157, Cys160, and Thr163 together coordinate Na(+).

It belongs to the peptidase T1B family. HslV subfamily. A double ring-shaped homohexamer of HslV is capped on each side by a ring-shaped HslU homohexamer. The assembly of the HslU/HslV complex is dependent on binding of ATP.

It is found in the cytoplasm. The catalysed reaction is ATP-dependent cleavage of peptide bonds with broad specificity.. Its activity is regulated as follows. Allosterically activated by HslU binding. Functionally, protease subunit of a proteasome-like degradation complex believed to be a general protein degrading machinery. The protein is ATP-dependent protease subunit HslV of Shewanella denitrificans (strain OS217 / ATCC BAA-1090 / DSM 15013).